The chain runs to 521 residues: NAD(P)H-quinone oxidoreductase subunit 2 (521 aa).

Transmembrane regions (helical) follow at residues 15–35 (ILPE…DITF), 42–62 (WTPY…YTQW), 79–99 (LSIV…LMSV), 109–126 (IGEF…AMFL), 131–153 (ELVM…TGYM), 167–187 (LLIG…LYGL), 208–228 (LALV…IAAV), 242–262 (PTPV…ALAI), 276–296 (WQFI…VVAI), 304–324 (MLAY…VIGT), 332–352 (VFYL…VILF), 376–396 (LALS…GFFG), 398–418 (LYLF…LGLI), and 464–484 (VGLV…NPLL).

This sequence belongs to the complex I subunit 2 family. NDH-1 can be composed of about 15 different subunits; different subcomplexes with different compositions have been identified which probably have different functions.

The protein localises to the cellular thylakoid membrane. It carries out the reaction a plastoquinone + NADH + (n+1) H(+)(in) = a plastoquinol + NAD(+) + n H(+)(out). It catalyses the reaction a plastoquinone + NADPH + (n+1) H(+)(in) = a plastoquinol + NADP(+) + n H(+)(out). Functionally, NDH-1 shuttles electrons from an unknown electron donor, via FMN and iron-sulfur (Fe-S) centers, to quinones in the respiratory and/or the photosynthetic chain. The immediate electron acceptor for the enzyme in this species is believed to be plastoquinone. Couples the redox reaction to proton translocation, and thus conserves the redox energy in a proton gradient. Cyanobacterial NDH-1 also plays a role in inorganic carbon-concentration. The sequence is that of NAD(P)H-quinone oxidoreductase subunit 2 from Acaryochloris marina (strain MBIC 11017).